The following is a 204-amino-acid chain: Probable nicotinate-nucleotide adenylyltransferase (204 aa).

It belongs to the NadD family.

The catalysed reaction is nicotinate beta-D-ribonucleotide + ATP + H(+) = deamido-NAD(+) + diphosphate. The protein operates within cofactor biosynthesis; NAD(+) biosynthesis; deamido-NAD(+) from nicotinate D-ribonucleotide: step 1/1. Functionally, catalyzes the reversible adenylation of nicotinate mononucleotide (NaMN) to nicotinic acid adenine dinucleotide (NaAD). The sequence is that of Probable nicotinate-nucleotide adenylyltransferase from Dehalococcoides mccartyi (strain ATCC BAA-2100 / JCM 16839 / KCTC 5957 / BAV1).